The primary structure comprises 207 residues: Ras-related protein Rab-8B (207 aa).

Residues Ser-17, Gly-18, Val-19, Gly-20, Lys-21, Thr-22, Cys-23, Thr-35, Ser-39, and Thr-40 each contribute to the GTP site. Thr-22 serves as a coordination point for Mg(2+). 2 short sequence motifs (switch) span residues 31–45 (DAFN…GIDF) and 63–80 (DTAG…YYRG). Residues Thr-40 and Asp-63 each coordinate Mg(2+). Position 66 (Gly-66) interacts with GTP. Thr-72 is subject to Phosphothreonine; by LRRK2. GTP-binding residues include Asn-121, Lys-122, Asp-124, Ala-152, and Lys-153. Phosphoserine is present on residues Ser-180 and Ser-183. Cysteine methyl ester is present on Cys-204. Cys-204 carries the S-geranylgeranyl cysteine lipid modification. The propeptide at 205 to 207 (SLL) is removed in mature form.

It belongs to the small GTPase superfamily. Rab family. As to quaternary structure, associated with actin, delta-catenin and alpha and beta tubulins. Interacts with OTOF. Interacts with PEX5R. Interacts with RAB3IP. Interacts with VIM. Interacts with CDH1. Interacts with MICALL2. Interacts with GDI1, GDI2, CHML and CHM; phosphorylation at Thr-72 disrupts these interactions. Interacts with MICAL1. The cofactor is Mg(2+). Post-translationally, phosphorylation of Thr-72 in the switch II region by LRRK2 prevents the association of RAB regulatory proteins, including CHM, CHML and RAB GDP dissociation inhibitors GDI1 and GDI2.

It is found in the cell membrane. The protein resides in the cytoplasmic vesicle. It localises to the phagosome membrane. The protein localises to the endosome membrane. The catalysed reaction is GTP + H2O = GDP + phosphate + H(+). Regulated by guanine nucleotide exchange factors (GEFs) including RAB3IP/RABIN8 which promotes the exchange of bound GDP for free GTP. Regulated by GTPase activating proteins (GAPs) which increase the GTP hydrolysis activity. Inhibited by GDP dissociation inhibitors (GDIs). Its function is as follows. The small GTPases Rab are key regulators of intracellular membrane trafficking, from the formation of transport vesicles to their fusion with membranes. Rabs cycle between an inactive GDP-bound form and an active GTP-bound form that is able to recruit to membranes different sets of downstream effectors directly responsible for vesicle formation, movement, tethering and fusion. RAB8B may be involved in polarized vesicular trafficking and neurotransmitter release. May participate in cell junction dynamics in Sertoli cells. May also participate in the export of a subset of neosynthesized proteins through a Rab8-Rab10-Rab11-dependent endososomal export route. This is Ras-related protein Rab-8B from Mus musculus (Mouse).